Consider the following 134-residue polypeptide: 6,7-dimethyl-8-ribityllumazine synthase (134 aa).

Residues Phe12, 44–46 (VFD), and 68–70 (SVI) each bind 5-amino-6-(D-ribitylamino)uracil. 73-74 (DT) serves as a coordination point for (2S)-2-hydroxy-3-oxobutyl phosphate. His76 functions as the Proton donor in the catalytic mechanism. Residue Leu101 participates in 5-amino-6-(D-ribitylamino)uracil binding. Arg116 contributes to the (2S)-2-hydroxy-3-oxobutyl phosphate binding site.

It belongs to the DMRL synthase family.

The catalysed reaction is (2S)-2-hydroxy-3-oxobutyl phosphate + 5-amino-6-(D-ribitylamino)uracil = 6,7-dimethyl-8-(1-D-ribityl)lumazine + phosphate + 2 H2O + H(+). The protein operates within cofactor biosynthesis; riboflavin biosynthesis; riboflavin from 2-hydroxy-3-oxobutyl phosphate and 5-amino-6-(D-ribitylamino)uracil: step 1/2. Its function is as follows. Catalyzes the formation of 6,7-dimethyl-8-ribityllumazine by condensation of 5-amino-6-(D-ribitylamino)uracil with 3,4-dihydroxy-2-butanone 4-phosphate. This is the penultimate step in the biosynthesis of riboflavin. The chain is 6,7-dimethyl-8-ribityllumazine synthase from Methanosarcina barkeri (strain Fusaro / DSM 804).